The primary structure comprises 222 residues: 7-cyano-7-deazaguanine synthase (222 aa).

8–18 provides a ligand contact to ATP; sequence LSGGMDSTTAA. The Zn(2+) site is built by Cys-187, Cys-195, Cys-198, and Cys-201.

It belongs to the QueC family. The cofactor is Zn(2+).

It carries out the reaction 7-carboxy-7-deazaguanine + NH4(+) + ATP = 7-cyano-7-deazaguanine + ADP + phosphate + H2O + H(+). Its pathway is purine metabolism; 7-cyano-7-deazaguanine biosynthesis. Its function is as follows. Catalyzes the ATP-dependent conversion of 7-carboxy-7-deazaguanine (CDG) to 7-cyano-7-deazaguanine (preQ(0)). This Nautilia profundicola (strain ATCC BAA-1463 / DSM 18972 / AmH) protein is 7-cyano-7-deazaguanine synthase.